The primary structure comprises 305 residues: RxLR effector protein PexRD25 (305 aa).

The N-terminal stretch at 1–16 (MRFLFYMLLACSAVVA) is a signal peptide. A RxLR-dEER motif is present at residues 44 to 56 (RLLRDRRSVDEER).

The protein belongs to the RxLR effector family.

Its subcellular location is the secreted. The protein resides in the host nucleus. The protein localises to the host nucleolus. Functionally, effector that enhances P.infestans colonization of Nicotiana benthamiana leaves. In Phytophthora infestans (strain T30-4) (Potato late blight agent), this protein is RxLR effector protein PexRD25.